The chain runs to 404 residues: uncharacterized protein (404 aa).

Residues 1 to 21 (MRKLGLALSIMGLLLVSIVAG) form the signal peptide. Residue C22 is modified to N-acetylcysteine. C22 carries S-archaeol cysteine lipidation.

The protein belongs to the BMP lipoprotein family.

It localises to the cell membrane. This is an uncharacterized protein from Pyrococcus abyssi (strain GE5 / Orsay).